The sequence spans 885 residues: Alanine--tRNA ligase (885 aa).

Zn(2+) is bound by residues H563, H567, C677, and H681. Positions 848 to 868 (LGGKGGGGRPDRAQGGAPSLA) are disordered.

The protein belongs to the class-II aminoacyl-tRNA synthetase family. It depends on Zn(2+) as a cofactor.

It localises to the cytoplasm. It catalyses the reaction tRNA(Ala) + L-alanine + ATP = L-alanyl-tRNA(Ala) + AMP + diphosphate. In terms of biological role, catalyzes the attachment of alanine to tRNA(Ala) in a two-step reaction: alanine is first activated by ATP to form Ala-AMP and then transferred to the acceptor end of tRNA(Ala). Also edits incorrectly charged Ser-tRNA(Ala) and Gly-tRNA(Ala) via its editing domain. The protein is Alanine--tRNA ligase of Paracoccus denitrificans (strain Pd 1222).